The sequence spans 151 residues: uncharacterized protein (151 aa).

A Nudix hydrolase domain is found at 6–143 (MKTLSAGIIF…QWQYVMGPSL (138 aa)).

This is an uncharacterized protein from Escherichia coli (Bacteriophage T4).